The primary structure comprises 218 residues: Glycerol-3-phosphate acyltransferase (218 aa).

5 helical membrane-spanning segments follow: residues 10–30 (LTLGIAIVGGYLLGSIPFGLI), 60–80 (DLAAITLLGDAGKGVVAVLLA), 88–108 (PAIIALAGGSAFLGHLFPVWL), 125–145 (SAAWPVGVAAGATWLAMAFLF), and 165–185 (AFDQPYPFMGLCLFMAVLIFI).

The protein belongs to the PlsY family. In terms of assembly, probably interacts with PlsX.

It localises to the cell inner membrane. It catalyses the reaction an acyl phosphate + sn-glycerol 3-phosphate = a 1-acyl-sn-glycero-3-phosphate + phosphate. Its pathway is lipid metabolism; phospholipid metabolism. Its function is as follows. Catalyzes the transfer of an acyl group from acyl-phosphate (acyl-PO(4)) to glycerol-3-phosphate (G3P) to form lysophosphatidic acid (LPA). This enzyme utilizes acyl-phosphate as fatty acyl donor, but not acyl-CoA or acyl-ACP. The chain is Glycerol-3-phosphate acyltransferase from Caulobacter vibrioides (strain ATCC 19089 / CIP 103742 / CB 15) (Caulobacter crescentus).